The following is a 193-amino-acid chain: RNA polymerase sigma-H factor (193 aa).

The Polymerase core binding motif lies at 49 to 62 (DVAQEAFIKAYRAL). Residues 157–176 (YEDIATVMQCPVGTVRSRIF) constitute a DNA-binding region (H-T-H motif).

The protein belongs to the sigma-70 factor family. ECF subfamily.

Sigma factors are initiation factors that promote the attachment of RNA polymerase to specific initiation sites and are then released. This sigma factor regulates genes such as algD, involved in alginate biosynthesis. The protein is RNA polymerase sigma-H factor (algU) of Pseudomonas aeruginosa (strain ATCC 15692 / DSM 22644 / CIP 104116 / JCM 14847 / LMG 12228 / 1C / PRS 101 / PAO1).